A 278-amino-acid chain; its full sequence is Complement component 1 Q subcomponent-binding protein, mitochondrial (278 aa).

A mitochondrion-targeting transit peptide spans 1-70; it reads MFQLLRCVPR…PCACGCGCSG (70 aa). Positions 73-90 are C1q binding; sequence TEGDKAFVDFLSDEIKEE. S84 is modified (phosphoserine). N6-acetyllysine occurs at positions 88 and 91. Positions 136–164 are disordered; that stretch reads IPPAFGGEEEEPSQGQKAEEQEPELTSTP. An interaction with MAVS region spans residues 166-209; the sequence is FVVEVTKDGSSKALVLDCHYPEDEIGQEDDQSDIFSIKEVSFQA. Y185 is modified (phosphotyrosine). S197 and S201 each carry phosphoserine. Phosphothreonine is present on T210.

Belongs to the MAM33 family. In terms of assembly, homotrimer; three monomers form a donut-shaped structure with an unusually asymmetric charge distribution on the surface. Interacts with CDK13, HRK, VTN, NFYB, ADRA1B, FOXC1, DDX21, DDX50, NCL, SRSF1 and SRSF9. Interacts with CD93; the association may represent a cell surface C1q receptor. Interacts with KRT1; the association represents a cell surface kininogen receptor. Interacts with CD209; the interaction is indicative for a C1q:C1QBP:CD209 signaling complex. Interacts with FBL and RRP1; the respective interactions with C1QBP are competitive. Probably associates with the mitoribosome. Interacts with MAVS; the interaction occurs upon viral transfection. Interacts with PPIF. Interacts with U2AF1L4. Interacts with PLEKHN1. Interacts with VGF-derived peptide TLQP-21. Interacts with MRE11 and RAD50; forming the MRC (MRE11-RAD50-C1QBP) complex that inhibits the activity of MRE11.

The protein localises to the mitochondrion matrix. Its subcellular location is the nucleus. The protein resides in the cell membrane. It is found in the secreted. It localises to the cytoplasm. The protein localises to the nucleolus. Multifunctional and multicompartmental protein involved in inflammation and infection processes, ribosome biogenesis, protein synthesis in mitochondria, regulation of apoptosis, transcriptional regulation and pre-mRNA splicing. At the cell surface is thought to act as an endothelial receptor for plasma proteins of the complement and kallikrein-kinin cascades. Putative receptor for C1q; specifically binds to the globular 'heads' of C1q thus inhibiting C1; may perform the receptor function through a complex with C1qR/CD93. In complex with cytokeratin-1/KRT1 is a high affinity receptor for kininogen-1/HMWK. Can also bind other plasma proteins, such as coagulation factor XII leading to its autoactivation. May function to bind initially fluid kininogen-1 to the cell membrane. The secreted form may enhance both extrinsic and intrinsic coagulation pathways. It is postulated that the cell surface form requires docking with transmembrane proteins for downstream signaling which might be specific for a cell-type or response. By acting as C1q receptor is involved in chemotaxis of immature dendritic cells and neutrophils and is proposed to signal through CD209/DC-SIGN on immature dendritic cells, through integrin alpha-4/beta-1 during trophoblast invasion of the decidua, and through integrin beta-1 during endothelial cell adhesion and spreading. Signaling involved in inhibition of innate immune response is implicating the PI3K-AKT/PKB pathway. Required for protein synthesis in mitochondria. In mitochondrial translation may be involved in formation of functional 55S mitoribosomes; the function seems to involve its RNA-binding activity. Acts as a RNA modification reader, which specifically recognizes and binds mitochondrial RNAs modified by C5-methylcytosine (m5C) in response to stress, and promotes recruitment of the mitochondrial degradosome complex, leading to their degradation. May be involved in the nucleolar ribosome maturation process; the function may involve the exchange of FBL for RRP1 in the association with pre-ribosome particles. Involved in regulation of RNA splicing by inhibiting the RNA-binding capacity of SRSF1 and its phosphorylation. Is required for the nuclear translocation of splicing factor U2AF1L4. Involved in regulation of CDKN2A- and HRK-mediated apoptosis. Stabilizes mitochondrial CDKN2A isoform smARF. May be involved in regulation of FOXC1 transcriptional activity and NFY/CCAAT-binding factor complex-mediated transcription. May play a role in antibacterial defense as it can bind to cell surface hyaluronan and inhibit Streptococcus pneumoniae hyaluronate lyase. May be involved in modulation of the immune response; ligation by HCV core protein is resulting in suppression of interleukin-12 production in monocyte-derived dendritic cells. Involved in regulation of antiviral response by inhibiting RIGI- and IFIH1-mediated signaling pathways probably involving its association with MAVS after viral infection. Acts as a regulator of DNA repair via homologous recombination by inhibiting the activity of MRE11: interacts with unphosphorylated MRE11 and RAD50 in absence of DNA damage, preventing formation and activity of the MRN complex. Following DNA damage, dissociates from phosphorylated MRE11, allowing formation of the MRN complex. In Bos taurus (Bovine), this protein is Complement component 1 Q subcomponent-binding protein, mitochondrial (C1QBP).